We begin with the raw amino-acid sequence, 389 residues long: Succinate--CoA ligase [ADP-forming] subunit beta (389 aa).

The region spanning 9–236 (RDMFEAHGVP…KDAADPLEAK (228 aa)) is the ATP-grasp domain. ATP is bound by residues Lys45, 52–54 (GRG), Ala94, and Glu99. Mg(2+) contacts are provided by Asn191 and Asp205. Substrate is bound by residues Asn256 and 318 to 320 (GIT).

Belongs to the succinate/malate CoA ligase beta subunit family. As to quaternary structure, heterotetramer of two alpha and two beta subunits. Requires Mg(2+) as cofactor.

The catalysed reaction is succinate + ATP + CoA = succinyl-CoA + ADP + phosphate. The enzyme catalyses GTP + succinate + CoA = succinyl-CoA + GDP + phosphate. It participates in carbohydrate metabolism; tricarboxylic acid cycle; succinate from succinyl-CoA (ligase route): step 1/1. Its function is as follows. Succinyl-CoA synthetase functions in the citric acid cycle (TCA), coupling the hydrolysis of succinyl-CoA to the synthesis of either ATP or GTP and thus represents the only step of substrate-level phosphorylation in the TCA. The beta subunit provides nucleotide specificity of the enzyme and binds the substrate succinate, while the binding sites for coenzyme A and phosphate are found in the alpha subunit. The chain is Succinate--CoA ligase [ADP-forming] subunit beta from Paenarthrobacter aurescens (strain TC1).